Consider the following 152-residue polypeptide: Acidic phospholipase A2 (152 aa).

An N-terminal signal peptide occupies residues 1–21; sequence MNPAHLLVLSAVCVSLLGASS. The propeptide occupies 22-27; that stretch reads IPPQPL. 7 disulfide bridges follow: Cys-38–Cys-104, Cys-54–Cys-151, Cys-56–Cys-72, Cys-71–Cys-132, Cys-78–Cys-125, Cys-88–Cys-118, and Cys-111–Cys-123. Residues Tyr-55, Gly-57, and Gly-59 each coordinate Ca(2+). The active site involves His-75. Asp-76 is a Ca(2+) binding site. Asp-126 is a catalytic residue.

It belongs to the phospholipase A2 family. Group I subfamily. D49 sub-subfamily. The cofactor is Ca(2+). Expressed by the venom gland.

It localises to the secreted. The catalysed reaction is a 1,2-diacyl-sn-glycero-3-phosphocholine + H2O = a 1-acyl-sn-glycero-3-phosphocholine + a fatty acid + H(+). In terms of biological role, PLA2 catalyzes the calcium-dependent hydrolysis of the 2-acyl groups in 3-sn-phosphoglycerides. This Ophiophagus hannah (King cobra) protein is Acidic phospholipase A2.